A 251-amino-acid chain; its full sequence is Hydroxyacylglutathione hydrolase (251 aa).

Zn(2+)-binding residues include H53, H55, D57, H58, H110, D127, and H165.

It belongs to the metallo-beta-lactamase superfamily. Glyoxalase II family. In terms of assembly, monomer. It depends on Zn(2+) as a cofactor.

The enzyme catalyses an S-(2-hydroxyacyl)glutathione + H2O = a 2-hydroxy carboxylate + glutathione + H(+). The protein operates within secondary metabolite metabolism; methylglyoxal degradation; (R)-lactate from methylglyoxal: step 2/2. In terms of biological role, thiolesterase that catalyzes the hydrolysis of S-D-lactoyl-glutathione to form glutathione and D-lactic acid. This Salmonella arizonae (strain ATCC BAA-731 / CDC346-86 / RSK2980) protein is Hydroxyacylglutathione hydrolase.